Reading from the N-terminus, the 67-residue chain is Spiniferin (67 aa).

A signal peptide spans 1-23 (MKTQLAILLITLVLFQMFSQSDA). Leucine amide is present on Leu-36. The propeptide occupies 40 to 67 (GLNDLSDLDELFDGEISKADLDFLREIM).

The protein belongs to the non-disulfide-bridged peptide (NDBP) superfamily. Short antimicrobial peptide (group 4) family. As to expression, expressed by the venom gland.

The protein localises to the secreted. It is found in the target cell membrane. Its function is as follows. Alpha-helical and amphipathic peptide with weak antimicrobial activities against both Gram-positive (MIC=41 uM to &gt;82 uM) and Gram-negative (MIC&gt;82 uM) bacteria. It has extremely weak hemolytic activity against human erythrocytes. This Heterometrus spinifer (Asia giant forest scorpion) protein is Spiniferin.